A 518-amino-acid chain; its full sequence is Crotonobetaine/carnitine--CoA ligase (518 aa).

This sequence belongs to the ATP-dependent AMP-binding enzyme family.

The enzyme catalyses 4-(trimethylamino)butanoate + ATP + CoA = 4-(trimethylamino)butanoyl-CoA + AMP + diphosphate. It catalyses the reaction crotonobetaine + ATP + CoA = crotonobetainyl-CoA + AMP + diphosphate. The catalysed reaction is (R)-carnitine + ATP + CoA = (R)-carnitinyl-CoA + AMP + diphosphate. The protein operates within amine and polyamine metabolism; carnitine metabolism. In terms of biological role, catalyzes the transfer of CoA to carnitine, generating the initial carnitinyl-CoA needed for the CaiB reaction cycle. Also has activity toward crotonobetaine and gamma-butyrobetaine. This is Crotonobetaine/carnitine--CoA ligase from Proteus sp. (strain LE138).